We begin with the raw amino-acid sequence, 122 residues long: UPF0145 protein Bmul_3577/BMULJ_04940 (122 aa).

Belongs to the UPF0145 family.

This Burkholderia multivorans (strain ATCC 17616 / 249) protein is UPF0145 protein Bmul_3577/BMULJ_04940.